A 348-amino-acid chain; its full sequence is Phosphate acyltransferase (348 aa).

This sequence belongs to the PlsX family. Homodimer. Probably interacts with PlsY.

It is found in the cytoplasm. The catalysed reaction is a fatty acyl-[ACP] + phosphate = an acyl phosphate + holo-[ACP]. It functions in the pathway lipid metabolism; phospholipid metabolism. In terms of biological role, catalyzes the reversible formation of acyl-phosphate (acyl-PO(4)) from acyl-[acyl-carrier-protein] (acyl-ACP). This enzyme utilizes acyl-ACP as fatty acyl donor, but not acyl-CoA. The polypeptide is Phosphate acyltransferase (Rhizorhabdus wittichii (strain DSM 6014 / CCUG 31198 / JCM 15750 / NBRC 105917 / EY 4224 / RW1) (Sphingomonas wittichii)).